An 838-amino-acid chain; its full sequence is Probable glucan 1,3-beta-glucosidase D (838 aa).

A compositionally biased stretch (basic and acidic residues) spans 1–23; it reads MPSHSRSRDRYRGRDESEPERDR. The interval 1–298 is disordered; sequence MPSHSRSRDR…GASDSDMDGA (298 aa). Over 1–310 the chain is Cytoplasmic; it reads MPSHSRSRDR…GTPFWKKKKT (310 aa). Acidic residues predominate over residues 35-45; sequence DYEDDELDDDD. Basic and acidic residues-rich tracts occupy residues 111 to 124, 149 to 164, 200 to 221, and 234 to 246; these read DSPRRRDRHRDGDR, SRDDRRERAYESEREA, AKLRSEYDKEDRSRAKADAKAE, and QPRRLDPFPEETP. The helical; Signal-anchor for type II membrane protein transmembrane segment at 311-331 threads the bilayer; it reads WIAVGVVVVLLAIIIPVAVVV. Over 332–838 the chain is Extracellular; sequence SKKNNEKKSD…PDFGDLPENY (507 aa). Residues 335 to 359 form a disordered region; sequence NNEKKSDSTTDDTTPRNSNLDGISR. 5 N-linked (GlcNAc...) asparagine glycosylation sites follow: Asn383, Asn388, Asn400, Asn553, and Asn565. Glu604 functions as the Proton donor in the catalytic mechanism. Residues Asn643 and Asn696 are each glycosylated (N-linked (GlcNAc...) asparagine). Glu709 serves as the catalytic Nucleophile.

Belongs to the glycosyl hydrolase 5 (cellulase A) family.

It is found in the cell membrane. The catalysed reaction is Successive hydrolysis of beta-D-glucose units from the non-reducing ends of (1-&gt;3)-beta-D-glucans, releasing alpha-glucose.. Glucosidase involved in the degradation of cellulosic biomass. Active on lichenan. The chain is Probable glucan 1,3-beta-glucosidase D (exgD) from Aspergillus terreus (strain NIH 2624 / FGSC A1156).